Here is a 1398-residue protein sequence, read N- to C-terminus: Protein timeless (1398 aa).

The necessary for normal circadian rhythm stretch occupies residues 237-268 (VSTLQKLLSLWFEASLSESSEDNESNTSPPKQ). Disordered stretches follow at residues 254–300 (ESSE…GGMR), 322–452 (ARVP…QKFN), 478–555 (TKGK…LRRK), 1127–1147 (TASSPSRYHHTGPRNSLSSVS), and 1220–1239 (NHRTGPSGDPSDCIGSSSTT). Over residues 273–290 (SSPMLTSDPTSDSSDNGS) the composition is skewed to low complexity. Over residues 291–300 (NGRGMGGGMR) the composition is skewed to gly residues. Polar residues predominate over residues 338-355 (MTGNDSEQPGSPEQSQPA). The segment covering 365–375 (EDQRHRQLNEH) has biased composition (basic and acidic residues). The span at 376 to 390 (GEEDEDEDEVEEEEY) shows a compositional bias: acidic residues. Composition is skewed to polar residues over residues 400–421 (LNLTQQPADKVNNTTNPTSSAP), 440–452 (ASTSAHAQMQKFN), and 504–515 (QVENQESISTSS). Positions 522-531 (QGKPQHQKPP) are enriched in low complexity. The Nuclear localization signal signature appears at 550 to 560 (KELRRKKLVKR).

Belongs to the timeless family. In terms of assembly, forms a heterodimer with period (PER); the complex then translocates into the nucleus. Phosphorylated with a circadian rhythmicity. Expressed in head, photoreceptors, lateral neurons and glial cells in the lamina and medulla of the optic lobes. Expression follows a light-dark cycle, levels show a significant decrease at the end of the night and then remain low throughout the light period (at protein level).

It is found in the nucleus. The protein localises to the cytoplasm. Its subcellular location is the perinuclear region. Its function is as follows. Required for the production of circadian rhythms. The biological cycle depends on the rhythmic formation and nuclear localization of the TIM-PER complex. Light induces the degradation of TIM, which promotes elimination of PER. Nuclear activity of the heterodimer coordinatively regulates PER and TIM transcription through a negative feedback loop. Behaves as a negative element in circadian transcriptional loop. Does not appear to bind DNA, suggesting indirect transcriptional inhibition. In Drosophila melanogaster (Fruit fly), this protein is Protein timeless (tim).